The following is a 649-amino-acid chain: 2-hydroxyacyl-CoA lyase 2 (649 aa).

Residues 2-21 (FHLIPFVVAFLLVFLTWFLI) traverse the membrane as a helical segment. Residue Glu-84 coordinates thiamine diphosphate. The thiamine pyrophosphate binding stretch occupies residues 474 to 554 (DFVGSAAYIL…AIGVIGNDAC (81 aa)). Mg(2+) contacts are provided by Asp-525 and Asn-551.

Belongs to the TPP enzyme family. Mg(2+) serves as cofactor. Requires thiamine diphosphate as cofactor.

The protein localises to the endoplasmic reticulum membrane. It catalyses the reaction 2-hydroxyoctadecanoyl-CoA = heptadecanal + formyl-CoA. The catalysed reaction is (2R)-hydroxyhexadecanoyl-CoA = pentadecanal + formyl-CoA. Endoplasmic reticulum 2-OH acyl-CoA lyase involved in the cleavage (C1 removal) reaction in the fatty acid alpha-oxydation in a thiamine pyrophosphate (TPP)-dependent manner. Involved in the phytosphingosine degradation pathway. The polypeptide is 2-hydroxyacyl-CoA lyase 2 (ilvbl) (Xenopus laevis (African clawed frog)).